Reading from the N-terminus, the 245-residue chain is 3-deoxy-manno-octulosonate cytidylyltransferase (245 aa).

Belongs to the KdsB family.

The protein localises to the cytoplasm. It carries out the reaction 3-deoxy-alpha-D-manno-oct-2-ulosonate + CTP = CMP-3-deoxy-beta-D-manno-octulosonate + diphosphate. The protein operates within nucleotide-sugar biosynthesis; CMP-3-deoxy-D-manno-octulosonate biosynthesis; CMP-3-deoxy-D-manno-octulosonate from 3-deoxy-D-manno-octulosonate and CTP: step 1/1. It functions in the pathway bacterial outer membrane biogenesis; lipopolysaccharide biosynthesis. Activates KDO (a required 8-carbon sugar) for incorporation into bacterial lipopolysaccharide in Gram-negative bacteria. The chain is 3-deoxy-manno-octulosonate cytidylyltransferase from Elusimicrobium minutum (strain Pei191).